Consider the following 286-residue polypeptide: Probable syntaxin-7B (286 aa).

The Cytoplasmic portion of the chain corresponds to 1–257 (MTDRQPLISK…YVYKSSYRKK (257 aa)). Over residues 97-107 (LSTSNKKESSH) the composition is skewed to basic and acidic residues. A disordered region spans residues 97–160 (LSTSNKKESS…TNNNNNNNNN (64 aa)). Low complexity predominate over residues 114–160 (QQQQQQQNNGNSNNNGYNTRGGYNQQQQQQQQQYNDYTNNNNNNNNN). Positions 185 to 247 (NRILDERNAN…EDAVVELEKA (63 aa)) constitute a t-SNARE coiled-coil homology domain. Residues 258-278 (MIIFVICLLVTLVAVGIFLAI) form a helical; Anchor for type IV membrane protein membrane-spanning segment. At 279-286 (YYGVIKKK) the chain is on the vesicular side.

The protein belongs to the syntaxin family.

It localises to the membrane. This chain is Probable syntaxin-7B (syn7B), found in Dictyostelium discoideum (Social amoeba).